Here is a 558-residue protein sequence, read N- to C-terminus: NAD-dependent malic enzyme 2 (558 aa).

Catalysis depends on Tyr-101, which acts as the Proton donor. An NAD(+)-binding site is contributed by Arg-154. Lys-172 (proton acceptor) is an active-site residue. Glu-243, Asp-244, and Asp-267 together coordinate a divalent metal cation. Residues Asp-267 and Asn-411 each coordinate NAD(+).

Belongs to the malic enzymes family. As to quaternary structure, homotetramer. Requires Mg(2+) as cofactor. The cofactor is Mn(2+).

It carries out the reaction (S)-malate + NAD(+) = pyruvate + CO2 + NADH. The catalysed reaction is oxaloacetate + H(+) = pyruvate + CO2. This is NAD-dependent malic enzyme 2 from Photobacterium profundum (strain SS9).